The primary structure comprises 1134 residues: Phospholipid-transporting ATPase IH (1134 aa).

Residues 1-61 (MDCSLVRTLV…SSKYTFWNFI (61 aa)) lie on the Cytoplasmic side of the membrane. Residues 62–82 (PKNLFEQFRRVANFYFLIIFL) form a helical membrane-spanning segment. At 83–88 (VQLIID) the chain is on the extracellular side. Residues 89 to 110 (TPTSPVTSGLPLFFVITVTAIK) traverse the membrane as a helical segment. Residues 111 to 296 (QGYEDWLRHK…SAVEKSMNAF (186 aa)) are Cytoplasmic-facing. The helical transmembrane segment at 297 to 318 (LIVYLCILISKALINTVLKYMW) threads the bilayer. Over 319–349 (QSEPFRDEPWYNQKTESERQRNLFLKAFTDF) the chain is Extracellular. A helical transmembrane segment spans residues 350 to 372 (LAFMVLFNYIIPVSMYVTVEMQK). Topologically, residues 373 to 881 (FLGSYFITWD…GHFYYIRISE (509 aa)) are cytoplasmic. The 4-aspartylphosphate intermediate role is filled by Asp-414. Positions 414, 415, 416, 511, 553, 576, 607, 687, 688, and 689 each coordinate ATP. Residue Asp-414 coordinates Mg(2+). Thr-416 is a Mg(2+) binding site. A Phosphoserine modification is found at Ser-738. Arg-798 and Lys-804 together coordinate ATP. Asp-825 contributes to the Mg(2+) binding site. Positions 828 and 829 each coordinate ATP. Asp-829 lines the Mg(2+) pocket. The chain crosses the membrane as a helical span at residues 882 to 902 (LVQYFFYKNVCFIFPQFLYQF). Topologically, residues 903 to 914 (FCGFSQQTLYDT) are extracellular. The chain crosses the membrane as a helical span at residues 915-934 (AYLTLYNISFTSLPILLYSL). Residues 935 to 964 (MEQHVGIDVLKRDPTLYRDVAKNALLRWRV) are Cytoplasmic-facing. The chain crosses the membrane as a helical span at residues 965 to 986 (FIYWTLLGLFDALVFFFGAYFV). The Extracellular segment spans residues 987-1000 (FENTTVTSNGQIFG). A helical membrane pass occupies residues 1001 to 1023 (NWTFGTLVFTVMVFTVTLKLALD). The Cytoplasmic segment spans residues 1024-1029 (THYWTW). The helical transmembrane segment at 1030–1050 (INHFVIWGSLLFYVVFSLLWG) threads the bilayer. Residues 1051-1068 (GVIWPFLNYQRMYYVFIQ) lie on the Extracellular side of the membrane. The helical transmembrane segment at 1069-1093 (MLSSGPAWLAIVLLVTISLLPDVLK) threads the bilayer. Residues 1094–1134 (KVLCRQLWPTATERVQTKSQCLSVEQSTIFMLSQTSSSLSF) lie on the Cytoplasmic side of the membrane.

The protein belongs to the cation transport ATPase (P-type) (TC 3.A.3) family. Type IV subfamily. In terms of assembly, component of a P4-ATPase flippase complex which consists of a catalytic alpha subunit ATP11A and an accessory beta subunit TMEM30A. Mg(2+) serves as cofactor. Post-translationally, proteolytically cleaved by CASP3. As to expression, widely expressed. Expressed in myoblasts.

The protein localises to the cell membrane. Its subcellular location is the early endosome. It localises to the recycling endosome. The protein resides in the endoplasmic reticulum membrane. It catalyses the reaction ATP + H2O + phospholipidSide 1 = ADP + phosphate + phospholipidSide 2.. The enzyme catalyses a 1,2-diacyl-sn-glycero-3-phospho-L-serine(out) + ATP + H2O = a 1,2-diacyl-sn-glycero-3-phospho-L-serine(in) + ADP + phosphate + H(+). It carries out the reaction a 1,2-diacyl-sn-glycero-3-phosphoethanolamine(out) + ATP + H2O = a 1,2-diacyl-sn-glycero-3-phosphoethanolamine(in) + ADP + phosphate + H(+). The flippase activity is inactivated by caspase-mediated cleavage in apoptotic cells, allowing for PS exposure on the cell surface and engulfment of apoptotic cells by macrophages. The ATPase activity is up-regulated by aminophospholipids PS and PE and down-regulated by increasing intracellular Ca2+ levels. Catalytic component of a P4-ATPase flippase complex which catalyzes the hydrolysis of ATP coupled to the transport of aminophospholipids, phosphatidylserines (PS) and phosphatidylethanolamines (PE), from the outer to the inner leaflet of the plasma membrane. Does not show flippase activity toward phosphatidylcholine (PC). Contributes to the maintenance of membrane lipid asymmetry with a specific role in morphogenesis of muscle cells. In myoblasts, mediates PS enrichment at the inner leaflet of plasma membrane, triggering PIEZO1-dependent Ca2+ influx and Rho GTPases signal transduction, subsequently leading to the assembly of cortical actomyosin fibers and myotube formation. May be involved in the uptake of farnesyltransferase inhibitor drugs, such as lonafarnib. This chain is Phospholipid-transporting ATPase IH (ATP11A), found in Homo sapiens (Human).